A 342-amino-acid polypeptide reads, in one-letter code: 4-hydroxy-2-oxovalerate aldolase (342 aa).

The 251-residue stretch at 7–257 (VWITEVALRD…KTGIDLYKMM (251 aa)) folds into the Pyruvate carboxyltransferase domain. 15–16 (RD) contributes to the substrate binding site. D16 is a Mn(2+) binding site. H19 serves as the catalytic Proton acceptor. Residues S169 and H196 each coordinate substrate. The Mn(2+) site is built by H196 and H198. Y287 lines the substrate pocket.

It belongs to the 4-hydroxy-2-oxovalerate aldolase family.

It catalyses the reaction (S)-4-hydroxy-2-oxopentanoate = acetaldehyde + pyruvate. The protein is 4-hydroxy-2-oxovalerate aldolase (pheE) of Geobacillus stearothermophilus (Bacillus stearothermophilus).